The chain runs to 124 residues: Small ribosomal subunit protein uS12 (124 aa).

Asp89 bears the 3-methylthioaspartic acid mark.

The protein belongs to the universal ribosomal protein uS12 family. As to quaternary structure, part of the 30S ribosomal subunit. Contacts proteins S8 and S17. May interact with IF1 in the 30S initiation complex.

Its function is as follows. With S4 and S5 plays an important role in translational accuracy. Interacts with and stabilizes bases of the 16S rRNA that are involved in tRNA selection in the A site and with the mRNA backbone. Located at the interface of the 30S and 50S subunits, it traverses the body of the 30S subunit contacting proteins on the other side and probably holding the rRNA structure together. The combined cluster of proteins S8, S12 and S17 appears to hold together the shoulder and platform of the 30S subunit. This Mannheimia haemolytica (Pasteurella haemolytica) protein is Small ribosomal subunit protein uS12 (rpsL).